A 483-amino-acid polypeptide reads, in one-letter code: Cobyric acid synthase (483 aa).

One can recognise a GATase cobBQ-type domain in the interval 251–438 (ALIVAVPMLP…LHGVFSADRF (188 aa)). C333 serves as the catalytic Nucleophile. H430 is a catalytic residue.

Belongs to the CobB/CobQ family. CobQ subfamily.

The protein operates within cofactor biosynthesis; adenosylcobalamin biosynthesis. In terms of biological role, catalyzes amidations at positions B, D, E, and G on adenosylcobyrinic A,C-diamide. NH(2) groups are provided by glutamine, and one molecule of ATP is hydrogenolyzed for each amidation. The chain is Cobyric acid synthase from Brucella suis biovar 1 (strain 1330).